Consider the following 223-residue polypeptide: Serum amyloid P-component (223 aa).

The first 19 residues, 1–19 (MDKMLFWVSVFTIFLDVFA), serve as a signal peptide directing secretion. The Pentraxin (PTX) domain occupies 24–223 (DKKVFVFPRE…YVIIKPRVWD (200 aa)). Cysteine 55 and cysteine 114 form a disulfide bridge. Positions 77, 78, 155, 156, 157, and 167 each coordinate Ca(2+). Asparagine 198 carries N-linked (GlcNAc...) asparagine glycosylation.

This sequence belongs to the pentraxin family. Homopentamer. Pentraxin (or pentaxin) have a discoid arrangement of 5 non-covalently bound subunits. Requires Ca(2+) as cofactor.

It localises to the secreted. This chain is Serum amyloid P-component (PTX2), found in Cavia porcellus (Guinea pig).